A 190-amino-acid polypeptide reads, in one-letter code: Protein GrpE (190 aa).

The segment covering 1–11 (MSNQDEPQNSP) has biased composition (polar residues). Positions 1–36 (MSNQDEPQNSPEEFAEDQQADVALEEASSDSSETAA) are disordered. Positions 13–28 (EFAEDQQADVALEEAS) are enriched in acidic residues.

It belongs to the GrpE family. In terms of assembly, homodimer.

It is found in the cytoplasm. In terms of biological role, participates actively in the response to hyperosmotic and heat shock by preventing the aggregation of stress-denatured proteins, in association with DnaK and GrpE. It is the nucleotide exchange factor for DnaK and may function as a thermosensor. Unfolded proteins bind initially to DnaJ; upon interaction with the DnaJ-bound protein, DnaK hydrolyzes its bound ATP, resulting in the formation of a stable complex. GrpE releases ADP from DnaK; ATP binding to DnaK triggers the release of the substrate protein, thus completing the reaction cycle. Several rounds of ATP-dependent interactions between DnaJ, DnaK and GrpE are required for fully efficient folding. The polypeptide is Protein GrpE (Teredinibacter turnerae (strain ATCC 39867 / T7901)).